The chain runs to 435 residues: MPDHLGDDMRKTKKDDTKEEEKNFQALDEGDIAVLKRYGQGPYAEQLKTLDADIENCLKKVNELSGVKESDTGLAPPALWDIAADKQAMQQEQPLQVARCTKIITSDKHDPRYLINVKQFAKFVVDLADSVAPTDIEEGMRVGVDRNKYQIHLPLPAKIDPTVTMMQVEEKPDVTYSDVGGCKDQIEKLREVVETPLLHPERYVNLGIEPPKGVLLYGPPGTGKTLCARAVANRTDACFIRVIGSELVQKYVGEGARMVRELFEMARTKKACLIFFDEIDAVGGARFDDGQGGDNEVQRTMLELINQLDGFDPRGNIKVLMATNRPDTLDPALMRPGRLDRKVEFALPDLAGRAHILKIHAKQMSVERDIRYDLLARLCPNSTGAEIRSVCTEAGMFAIRARRKVATEKDFLEAINKVVKGYAKFSATPRYLTHN.

A compositionally biased stretch (basic and acidic residues) spans 1–23; sequence MPDHLGDDMRKTKKDDTKEEEKN. The tract at residues 1-24 is disordered; sequence MPDHLGDDMRKTKKDDTKEEEKNF. 218 to 225 provides a ligand contact to ATP; it reads GPPGTGKT.

The protein belongs to the AAA ATPase family.

It is found in the cytoplasm. The protein resides in the nucleus. Functionally, the 26S proteasome is involved in the ATP-dependent degradation of ubiquitinated proteins. The regulatory (or ATPase) complex confers ATP dependency and substrate specificity to the 26S complex. This is 26S proteasome regulatory subunit 7 (rpt-1) from Caenorhabditis elegans.